We begin with the raw amino-acid sequence, 346 residues long: Uricase (346 aa).

A disordered region spans residues 1–23 (MFATPLRQPTNASGARPAVSMDG). Active-site charge relay system residues include Lys-39 and Thr-84. The urate site is built by Thr-84, Asp-85, Phe-208, Arg-225, Val-273, Gln-274, and Asn-300. Residue His-302 is the Charge relay system of the active site. Residues 344-346 (SHL) carry the Microbody targeting signal motif.

It belongs to the uricase family. In terms of tissue distribution, malpighian tubules.

Its subcellular location is the peroxisome. It carries out the reaction urate + O2 + H2O = 5-hydroxyisourate + H2O2. It participates in purine metabolism; urate degradation; (S)-allantoin from urate: step 1/3. With respect to regulation, repressed by 20-hydroxyecdysone. In terms of biological role, catalyzes the oxidation of uric acid to 5-hydroxyisourate, which is further processed to form (S)-allantoin. The polypeptide is Uricase (Uro) (Drosophila pseudoobscura pseudoobscura (Fruit fly)).